Reading from the N-terminus, the 367-residue chain is Dihydroorotate dehydrogenase (quinone) (367 aa).

FMN-binding positions include 61–65 and T85; that span reads AGFDK. K65 is a binding site for substrate. Residue 110–114 participates in substrate binding; it reads NRMGF. Positions 138 and 169 each coordinate FMN. N169 lines the substrate pocket. S172 functions as the Nucleophile in the catalytic mechanism. N174 provides a ligand contact to substrate. Positions 212 and 240 each coordinate FMN. Residue 241–242 participates in substrate binding; it reads NT. Residues G263, G292, and 313–314 contribute to the FMN site; that span reads YS.

Belongs to the dihydroorotate dehydrogenase family. Type 2 subfamily. Monomer. FMN is required as a cofactor.

Its subcellular location is the cell membrane. The catalysed reaction is (S)-dihydroorotate + a quinone = orotate + a quinol. The protein operates within pyrimidine metabolism; UMP biosynthesis via de novo pathway; orotate from (S)-dihydroorotate (quinone route): step 1/1. Its function is as follows. Catalyzes the conversion of dihydroorotate to orotate with quinone as electron acceptor. The protein is Dihydroorotate dehydrogenase (quinone) of Rhodospirillum rubrum (strain ATCC 11170 / ATH 1.1.1 / DSM 467 / LMG 4362 / NCIMB 8255 / S1).